A 119-amino-acid polypeptide reads, in one-letter code: UPF0145 protein Ta0182 (119 aa).

Belongs to the UPF0145 family.

The polypeptide is UPF0145 protein Ta0182 (Thermoplasma acidophilum (strain ATCC 25905 / DSM 1728 / JCM 9062 / NBRC 15155 / AMRC-C165)).